The primary structure comprises 877 residues: Phosphoenolpyruvate carboxylase (877 aa).

Residues His137 and Lys542 contribute to the active site.

It belongs to the PEPCase type 1 family. Mg(2+) serves as cofactor.

The catalysed reaction is oxaloacetate + phosphate = phosphoenolpyruvate + hydrogencarbonate. In terms of biological role, forms oxaloacetate, a four-carbon dicarboxylic acid source for the tricarboxylic acid cycle. The sequence is that of Phosphoenolpyruvate carboxylase from Tolumonas auensis (strain DSM 9187 / NBRC 110442 / TA 4).